We begin with the raw amino-acid sequence, 629 residues long: Plastin-1 (629 aa).

Residue M1 is modified to N-acetylmethionine. 2 consecutive EF-hand domains span residues 11–46 and 51–86; these read EELE…ASLP and KVRE…LKSK. 10 residues coordinate Ca(2+): D24, D26, S28, Y30, E35, D64, N66, D68, K70, and E75. 2 actin-binding regions span residues 108 to 380 and 381 to 625; these read TSTI…CLHK and PNNN…GKGL. Calponin-homology (CH) domains lie at 122–238, 266–376, 395–504, and 516–625; these read EEEK…KVGL, LSPE…NTYP, SKEE…RRYT, and KVND…GKGL.

Monomer. In terms of processing, phosphorylated. In terms of tissue distribution, in small intestine, colon, and kidney; relatively lower levels of expression are detected in the lung and stomach.

The protein resides in the cytoplasm. The protein localises to the cell projection. It is found in the stereocilium. In terms of biological role, actin-bundling protein. In the inner ear, it is required for stereocilia formation. Mediates liquid packing of actin filaments that is necessary for stereocilia to grow to their proper dimensions. In Homo sapiens (Human), this protein is Plastin-1 (PLS1).